The following is a 280-amino-acid chain: 4-diphosphocytidyl-2-C-methyl-D-erythritol kinase (280 aa).

Lys-8 is a catalytic residue. Position 91–101 (Pro-91–Thr-101) interacts with ATP. Residue Asp-133 is part of the active site.

This sequence belongs to the GHMP kinase family. IspE subfamily.

The enzyme catalyses 4-CDP-2-C-methyl-D-erythritol + ATP = 4-CDP-2-C-methyl-D-erythritol 2-phosphate + ADP + H(+). The protein operates within isoprenoid biosynthesis; isopentenyl diphosphate biosynthesis via DXP pathway; isopentenyl diphosphate from 1-deoxy-D-xylulose 5-phosphate: step 3/6. Functionally, catalyzes the phosphorylation of the position 2 hydroxy group of 4-diphosphocytidyl-2C-methyl-D-erythritol. The polypeptide is 4-diphosphocytidyl-2-C-methyl-D-erythritol kinase (Clostridium botulinum (strain Alaska E43 / Type E3)).